Reading from the N-terminus, the 293-residue chain is Digeranylgeranylglyceryl phosphate synthase (293 aa).

The next 7 helical transmembrane spans lie at L26–L46, L50–F70, F107–L127, F140–I160, I215–P235, F237–V257, and Y273–F293.

Belongs to the UbiA prenyltransferase family. DGGGP synthase subfamily. Mg(2+) is required as a cofactor.

It is found in the cell membrane. The enzyme catalyses sn-3-O-(geranylgeranyl)glycerol 1-phosphate + (2E,6E,10E)-geranylgeranyl diphosphate = 2,3-bis-O-(geranylgeranyl)-sn-glycerol 1-phosphate + diphosphate. It participates in membrane lipid metabolism; glycerophospholipid metabolism. Functionally, prenyltransferase that catalyzes the transfer of the geranylgeranyl moiety of geranylgeranyl diphosphate (GGPP) to the C2 hydroxyl of (S)-3-O-geranylgeranylglyceryl phosphate (GGGP). This reaction is the second ether-bond-formation step in the biosynthesis of archaeal membrane lipids. The polypeptide is Digeranylgeranylglyceryl phosphate synthase (Archaeoglobus fulgidus (strain ATCC 49558 / DSM 4304 / JCM 9628 / NBRC 100126 / VC-16)).